The following is a 142-amino-acid chain: Coactosin-like protein (142 aa).

An N-acetylalanine modification is found at A2. The ADF-H domain occupies 2–130; the sequence is ATKIDKEACR…EEDFIRSELK (129 aa). At S23 the chain carries Phosphoserine. Residues 66 to 75 are flexible and important for F-actin binding; that stretch reads TGDAMSKRSK. An N6-acetyllysine modification is found at K102. Residue S141 is modified to Phosphoserine.

This sequence belongs to the actin-binding proteins ADF family. Coactosin subfamily. In terms of assembly, interacts with 5-lipoxygenase (ALOX5/5LO) in a calcium-independent manner. Binds to F-actin with a stoichiometry of 1:2.

It localises to the cytoplasm. The protein localises to the cytoskeleton. The protein resides in the nucleus. In terms of biological role, binds to F-actin in a calcium-independent manner. Has no direct effect on actin depolymerization. Acts as a chaperone for ALOX5 (5LO), influencing both its stability and activity in leukotrienes synthesis. This Rattus norvegicus (Rat) protein is Coactosin-like protein.